Consider the following 300-residue polypeptide: Uricase (300 aa).

Ala-2 is modified (N-acetylalanine). N6-acetyllysine; alternate is present on residues Lys-6 and Lys-19. Lys-6 and Lys-19 each carry N6-succinyllysine; alternate. Lys-19 (charge relay system) is an active-site residue. Lys-23 and Lys-32 each carry N6-acetyllysine. Residues Ser-35 and Ser-59 each carry the phosphoserine modification. The active-site Charge relay system is Thr-64. Residues Thr-64 and Asp-65 each contribute to the urate site. Lys-114, Lys-118, and Lys-160 each carry N6-acetyllysine. A urate-binding site is contributed by Phe-166. 2 positions are modified to N6-acetyllysine: Lys-171 and Lys-181. Arg-183 is a urate binding site. Lys-217 and Lys-224 each carry N6-acetyllysine; alternate. Lys-217 and Lys-224 each carry N6-succinyllysine; alternate. The residue at position 228 (Ser-228) is a Phosphoserine. Urate-binding residues include Val-231, Gln-232, and Asn-258. His-260 acts as the Charge relay system in catalysis. Lys-274 carries the post-translational modification N6-acetyllysine. The residue at position 285 (Tyr-285) is a Phosphotyrosine. A Microbody targeting signal motif is present at residues 298 to 300 (SRL).

This sequence belongs to the uricase family.

It localises to the peroxisome. It carries out the reaction urate + O2 + H2O = 5-hydroxyisourate + H2O2. It functions in the pathway purine metabolism; urate degradation; (S)-allantoin from urate: step 1/3. Catalyzes the oxidation of uric acid to 5-hydroxyisourate, which is further processed to form (S)-allantoin. This Oryctolagus cuniculus (Rabbit) protein is Uricase (UOX).